A 1782-amino-acid polypeptide reads, in one-letter code: AF4/FMR2 family member lilli (1782 aa).

Disordered regions lie at residues 42 to 84, 150 to 313, 434 to 515, 605 to 637, 691 to 732, 768 to 820, 839 to 891, 911 to 1064, 1091 to 1126, 1166 to 1234, 1296 to 1327, 1386 to 1420, 1450 to 1484, and 1674 to 1701; these read NMED…PSEG, ASSS…PPPE, MPTP…QQQQ, GGSS…NLSR, EKLH…QQRY, GALP…LQIP, KVQP…SNKK, VAAA…AAAS, AGNS…QHKQ, LPQS…KQGQ, ARQH…TPKD, LKQE…EQLS, QESA…QQQQ, and GNTP…GKIV. Residues 54-80 are compositionally biased toward basic and acidic residues; it reads REKYERQQGIQSDDRETSLFGEPRRLN. Composition is skewed to low complexity over residues 164 to 180 and 211 to 260; these read QQQQ…QQQQ and PSSS…MSSP. Over residues 435-447 the composition is skewed to pro residues; sequence PTPPKASPTPPAI. T443 bears the Phosphothreonine mark. A compositionally biased stretch (basic and acidic residues) spans 450–463; it reads MKTEKNHSLEKQDS. Positions 465-475 are enriched in acidic residues; it reads LENDLELSESD. Phosphoserine is present on residues S472 and S474. Composition is skewed to low complexity over residues 484 to 515 and 609 to 622; these read SAGN…QQQQ and GSCM…SSSN. Residues 623 to 634 show a composition bias toward polar residues; sequence KTPSPTDSNRWN. Residues 691-701 show a composition bias toward basic and acidic residues; it reads EKLHDEPRHVG. 2 stretches are compositionally biased toward low complexity: residues 714-730 and 782-805; these read QQQQ…QQQQ and SDSG…GGSS. The segment covering 859–869 has biased composition (basic residues); sequence PRQKKPRKKKM. Phosphoserine occurs at positions 878 and 879. A DNA-binding region (a.T hook) is located at residues 920–932; that stretch reads KKGRGRPRKQAQQ. The segment covering 929–972 has biased composition (low complexity); that stretch reads QAQQQQQQQQQQLQQSGNLSSASASSSQAKGPTLTAAKKPLAKA. Phosphoserine is present on residues S949 and S951. Residues 973–982 show a composition bias toward polar residues; it reads SVSNSNSTAP. Composition is skewed to low complexity over residues 996-1018, 1033-1064, 1105-1116, and 1174-1196; these read SNSS…TMAA, SSSS…AAAS, SVGSSSNSSSSS, and SSSD…SSSS. Positions 1308-1318 are enriched in polar residues; sequence AQQNGHLSSRS. Residues 1450-1460 are compositionally biased toward polar residues; it reads QESAANGSPNK. Phosphoserine is present on S1457. Composition is skewed to low complexity over residues 1461–1484 and 1674–1694; these read LQQQ…QQQQ and GNTP…SGSN.

It belongs to the AF4 family.

Its subcellular location is the nucleus. Has a role in transcriptional regulation. Acts in parallel with the Ras/MAPK and the PI3K/PKB pathways in the control of cell identity and cellular growth. Essential for regulation of the cytoskeleton and cell growth but not for cell proliferation or growth rate. Required specifically for the microtubule-based basal transport of lipid droplets. Plays a partially redundant function downstream of Raf in cell fate specification in the developing eye. Pair-rule protein that regulates embryonic cellularization, gastrulation and segmentation. In Drosophila mojavensis (Fruit fly), this protein is AF4/FMR2 family member lilli.